The following is a 133-amino-acid chain: Small ribosomal subunit protein uS8 (133 aa).

The tract at residues 1–32 (MANHDPISDMLTRIRNASEKRHESTKVPASRM) is disordered. Over residues 16–25 (NASEKRHEST) the composition is skewed to basic and acidic residues.

It belongs to the universal ribosomal protein uS8 family. Part of the 30S ribosomal subunit. Contacts proteins S5 and S12.

Its function is as follows. One of the primary rRNA binding proteins, it binds directly to 16S rRNA central domain where it helps coordinate assembly of the platform of the 30S subunit. This is Small ribosomal subunit protein uS8 from Synechococcus sp. (strain CC9311).